A 60-amino-acid polypeptide reads, in one-letter code: Mastoparan-VT4 (60 aa).

An N-terminal signal peptide occupies residues 1–27 (MKNPILILFTAFIALLGFFGMSAEALA). 4 AXPX repeats span residues 27–30 (ADPK), 31–34 (ADPL), 35–38 (AGPN), and 41–44 (ADPE). Positions 28-45 (DPKADPLAGPNPDADPEA) are excised as a propeptide. Leucine amide is present on Leu59.

It belongs to the MCD family. Mastoparan subfamily. In terms of tissue distribution, expressed by the venom gland.

The protein localises to the secreted. Functionally, the synthetic peptide shows antimicrobial activities against Gram-negative bacteria (but not against all strains tested), Gram-positive bacteria (not all strains tested) and the fungi C.albicans and C.parapsilosis. Exhibits little hemolytic activity against washed human erythrocytes. The chain is Mastoparan-VT4 from Vespa tropica (Greater banded hornet).